Here is a 72-residue protein sequence, read N- to C-terminus: UPF0270 protein YheU (72 aa).

Belongs to the UPF0270 family.

The polypeptide is UPF0270 protein YheU (Shigella flexneri serotype 5b (strain 8401)).